The sequence spans 660 residues: Dual specificity mitogen-activated protein kinase kinase 1 (660 aa).

Residues 1-57 (MNTNTNTNTNISSSGNNIINTPTTNNNNKNNNNNNNNNNNSNNSNNNSSNNNNNNNN) show a composition bias toward low complexity. 3 disordered regions span residues 1–60 (MNTN…NAVG), 105–169 (KGES…FNNL), and 204–229 (NNNYNNYNNNNNSNNNNNNYNNSNNN). Lysine 105 participates in a covalent cross-link: Glycyl lysine isopeptide (Lys-Gly) (interchain with G-Cter in SUMO). The span at 123 to 148 (LHSNLNPQLLASPTSSESMDFNQGFY) shows a compositional bias: polar residues. A compositionally biased stretch (low complexity) spans 149 to 169 (NNNNNNNNNNNNNNLNNFNNL). A Protein kinase domain is found at 292-641 (LKIIRVLGRG…ASNLLNHEFV (350 aa)). ATP contacts are provided by residues 298–306 (LGRGAGGVV) and lysine 321. Aspartate 414 functions as the Proton acceptor in the catalytic mechanism. Disordered stretches follow at residues 491-510 (SNLPHQQQQPLQQQQQQQQQ) and 539-573 (NNSNNNIRNSNNNNNNNNNNNNNNNNNNNNNVLDI). Low complexity-rich tracts occupy residues 496 to 510 (QQQQPLQQQQQQQQQ) and 539 to 569 (NNSNNNIRNSNNNNNNNNNNNNNNNNNNNNN).

The protein belongs to the protein kinase superfamily. STE Ser/Thr protein kinase family. MAP kinase kinase subfamily. As to quaternary structure, interacts with mip1. Mg(2+) serves as cofactor. Post-translationally, sumoylated and ubiquitinated in response to chemoattractant stimulation. Sumoylation is linked to kinase activation and results in translocation.

The protein resides in the cytoplasm. It localises to the nucleus. The catalysed reaction is L-seryl-[protein] + ATP = O-phospho-L-seryl-[protein] + ADP + H(+). It catalyses the reaction L-threonyl-[protein] + ATP = O-phospho-L-threonyl-[protein] + ADP + H(+). It carries out the reaction L-tyrosyl-[protein] + ATP = O-phospho-L-tyrosyl-[protein] + ADP + H(+). In terms of biological role, required for cAMP-mediated activation of guanylyl cyclase activity and plays an essential role in aggregation, morphogenesis, and chemotaxis. Appears to act upstream of erk1 but not erk2. In Dictyostelium discoideum (Social amoeba), this protein is Dual specificity mitogen-activated protein kinase kinase 1.